Here is a 588-residue protein sequence, read N- to C-terminus: MEIAPSTSRFKLYDQFELLEFPDKYVVKPIESPEEGFSVNRRDGNIKPLDENASSGSPTRVSTIYGVGGTIRLLAGTYLLVITSREEVGNFLGLPIFRVTAMKFLPCNEALRFATAQEKKDETYFRTLLQALETTPGLYFSYETDLTLNLQRRCKLAEGWNRKPMWKQADPRYVWNWHLLEDLIECKLDGFIIPILQGSYQVAELKLKNSPAVVSIMSRRCTRRLGTRMWRRGANLEGDAANFVESEQIVEINGFKFSLLQVRGSIPLLWEQIVDLSYKPRLKINKHEETPKVVQRHFHDLCQRYGEIMAVDLTDQHGDEGALSKAYATEMEKLPDVRYVSFDFHQVCGTTNFDNLGVLYEQIGDEFEKQGYFLVDADENILEEQKGVIRSNCIDCLDRTNVTQSFMGQKSLNLQLQRIGVCDSTECISTFEDDYTKFRTIWAEQGDEVSLQYAGTYALKGDLVRYGKQTMTGAIKDGLSAMSRYYLNNFQDGVRQDALDLISGRYTVGTHSPSQLQPIGSQPSFLPVASALLIGGVTVTSFTIHQAGRNTQQYLASALWAGVTAGVVAMIKANGRHLTSRPRLCHLI.

The disordered stretch occupies residues 37–56 (FSVNRRDGNIKPLDENASSG). Residues 40–50 (NRRDGNIKPLD) show a composition bias toward basic and acidic residues. One can recognise an SAC domain in the interval 129–455 (LQALETTPGL…GDEVSLQYAG (327 aa)). A Phosphatase catalytic core motif is present at residues 390–401 (RSNCIDCLDRTN). A run of 2 helical transmembrane segments spans residues 524–544 (SFLP…SFTI) and 555–575 (LASA…KANG).

In terms of tissue distribution, ubiquitous with a higher level of expression in young seedlings than in other tissues.

The protein localises to the endoplasmic reticulum membrane. Functionally, phosphoinositide phosphatase that hydrolyzes PtdIns(3)P and PtdIns(4)P. The sequence is that of Phosphoinositide phosphatase SAC8 (SAC8) from Arabidopsis thaliana (Mouse-ear cress).